Here is a 213-residue protein sequence, read N- to C-terminus: LIM domain-containing protein PLIM2c (213 aa).

2 LIM zinc-binding domains span residues 9-69 and 105-165; these read DKCK…LFKE and DKCA…LFLE. The interval 177–213 is disordered; the sequence is ANHRRSTAEEDKTEPKEDEANPTEEETSDAAAEEHES. Residues 182 to 195 show a composition bias toward basic and acidic residues; the sequence is STAEEDKTEPKEDE.

Interacts with F-actin. As to expression, exclusively expressed in pollen grains.

It localises to the cytoplasm. It is found in the cytoskeleton. In terms of biological role, binds to actin filaments and promotes cross-linking into thick bundles. Has an actin-stabilizing activity. Associates predominantly with long and dynamic actin bundles in the shank of growing pollen tubes. The actin regulatory activities are inhibited by pH &gt; 6.8 and/or high [Ca(2+)]. In Arabidopsis thaliana (Mouse-ear cress), this protein is LIM domain-containing protein PLIM2c.